Consider the following 205-residue polypeptide: MRLGRDFYNRDTVTVAKELLGKVLVRNINGVTLKGKIVETEAYIGAIDKASHAYGGKRTNRTETLYADPGTVYVYIIYGMYHCLNLISEEKDVAGGVLIRGIEPLEGIEEMSKLRYKKSYEELSNYEKKNFSNGPSKLCMALGIDKGENGINTISSEEIYVEDDSLIKKDFSIVEAKRIGIDYAEEARDFLWRFYIKDNKFVSKK.

The protein belongs to the DNA glycosylase MPG family.

The polypeptide is Putative 3-methyladenine DNA glycosylase (Clostridium perfringens (strain 13 / Type A)).